The sequence spans 91 residues: Ragulator complex protein LAMTOR5 homolog (91 aa).

The protein belongs to the LAMTOR5 family. In terms of assembly, part of the Ragulator complex.

The protein resides in the cytoplasm. Its subcellular location is the lysosome. Regulator of the TOR pathway, a signaling cascade that promotes cell growth in response to growth factors, energy levels, and amino acids. As part of the Ragulator complex, may activate the TOR signaling cascade in response to amino acids. This is Ragulator complex protein LAMTOR5 homolog from Ixodes scapularis (Black-legged tick).